A 457-amino-acid polypeptide reads, in one-letter code: ATP synthase subunit beta (457 aa).

Gly-147–Thr-154 lines the ATP pocket.

This sequence belongs to the ATPase alpha/beta chains family. As to quaternary structure, F-type ATPases have 2 components, CF(1) - the catalytic core - and CF(0) - the membrane proton channel. CF(1) has five subunits: alpha(3), beta(3), gamma(1), delta(1), epsilon(1). CF(0) has three main subunits: a(1), b(2) and c(9-12). The alpha and beta chains form an alternating ring which encloses part of the gamma chain. CF(1) is attached to CF(0) by a central stalk formed by the gamma and epsilon chains, while a peripheral stalk is formed by the delta and b chains.

Its subcellular location is the cell inner membrane. It catalyses the reaction ATP + H2O + 4 H(+)(in) = ADP + phosphate + 5 H(+)(out). Its function is as follows. Produces ATP from ADP in the presence of a proton gradient across the membrane. The catalytic sites are hosted primarily by the beta subunits. This chain is ATP synthase subunit beta, found in Haemophilus influenzae (strain PittEE).